Consider the following 433-residue polypeptide: 3-phosphoshikimate 1-carboxyvinyltransferase (433 aa).

3 residues coordinate 3-phosphoshikimate: Lys-22, Ser-23, and Arg-27. Lys-22 is a phosphoenolpyruvate binding site. Phosphoenolpyruvate is bound by residues Gly-95 and Arg-123. Residues Ser-167, Gln-169, Asp-315, and Lys-342 each coordinate 3-phosphoshikimate. Residue Gln-169 participates in phosphoenolpyruvate binding. Residue Asp-315 is the Proton acceptor of the active site. 2 residues coordinate phosphoenolpyruvate: Arg-346 and Arg-387.

Belongs to the EPSP synthase family. As to quaternary structure, monomer.

The protein resides in the cytoplasm. It carries out the reaction 3-phosphoshikimate + phosphoenolpyruvate = 5-O-(1-carboxyvinyl)-3-phosphoshikimate + phosphate. It functions in the pathway metabolic intermediate biosynthesis; chorismate biosynthesis; chorismate from D-erythrose 4-phosphate and phosphoenolpyruvate: step 6/7. In terms of biological role, catalyzes the transfer of the enolpyruvyl moiety of phosphoenolpyruvate (PEP) to the 5-hydroxyl of shikimate-3-phosphate (S3P) to produce enolpyruvyl shikimate-3-phosphate and inorganic phosphate. In Legionella pneumophila (strain Paris), this protein is 3-phosphoshikimate 1-carboxyvinyltransferase.